Reading from the N-terminus, the 354-residue chain is Guanine nucleotide-binding protein G(i) subunit alpha-1 (354 aa).

The N-myristoyl glycine moiety is linked to residue G2. The S-palmitoyl cysteine moiety is linked to residue C3. The 323-residue stretch at 32 to 354 folds into the G-alpha domain; sequence REVKLLLLGA…KNNLKDCGLF (323 aa). Residues 35–48 form a G1 motif region; the sequence is KLLLLGAGESGKST. GTP contacts are provided by residues 43-48, 150-151, and 175-178; these read ESGKST, DS, and LRTR. S47 provides a ligand contact to Mg(2+). A G2 motif region spans residues 173–181; the sequence is DVLRTRVKT. Residue T181 coordinates Mg(2+). The G3 motif stretch occupies residues 196 to 205; sequence FKMFDVGGQR. GTP is bound by residues 200–204, 269–272, and A326; these read DVGGQ and NKKD. Residues 265–272 are G4 motif; the sequence is ILFLNKKD. Residues 324-329 form a G5 motif region; that stretch reads TCATDT.

The protein belongs to the G-alpha family. G(i/o/t/z) subfamily. As to quaternary structure, heterotrimeric G proteins are composed of 3 units; alpha, beta and gamma. The alpha chain contains the guanine nucleotide binding site. Part of a spindle orientation complex. Identified in complex with the beta subunit GNB1 and the gamma subunit GNG1. Identified in complex with the beta subunit GNB1 and the gamma subunit GNG2. GTP binding causes dissociation of the heterotrimer, liberating the individual subunits so that they can interact with downstream effector proteins. Post-translationally, myristoylation at Gly-2 is required for membrane anchoring before palmitoylation. In terms of processing, palmitoylation at Cys-3 varies with membrane lipid composition.

It is found in the nucleus. The protein localises to the cytoplasm. It localises to the cell membrane. Its subcellular location is the cytoskeleton. The protein resides in the microtubule organizing center. It is found in the centrosome. The protein localises to the cell cortex. It localises to the membrane. It catalyses the reaction GTP + H2O = GDP + phosphate + H(+). Guanine nucleotide-binding proteins (G proteins) function as transducers downstream of G protein-coupled receptors (GPCRs) in numerous signaling cascades. The alpha chain contains the guanine nucleotide binding site and alternates between an active, GTP-bound state and an inactive, GDP-bound state. Signaling by an activated GPCR promotes GDP release and GTP binding. The alpha subunit has a low GTPase activity that converts bound GTP to GDP, thereby terminating the signal. Both GDP release and GTP hydrolysis are modulated by numerous regulatory proteins. Signaling is mediated via effector proteins, such as adenylate cyclase. Inhibits adenylate cyclase activity, leading to decreased intracellular cAMP levels. Required for cortical dynein-dynactin complex recruitment during metaphase. The protein is Guanine nucleotide-binding protein G(i) subunit alpha-1 (gnai1) of Oryzias latipes (Japanese rice fish).